A 79-amino-acid chain; its full sequence is Conotoxin ArMSGL-021 (79 aa).

A signal peptide spans 1–20 (MSRLGIMVLTLLLLVFIVTS). Positions 21–44 (HQDAGEKQATHRGAINFRWRRSLI) are excised as a propeptide. Cystine bridges form between Cys-52-Cys-64, Cys-56-Cys-73, and Cys-63-Cys-77. Position 78 is a leucine amide (Leu-78).

Belongs to the conotoxin O3 superfamily. Expressed by the venom duct.

The protein resides in the secreted. The sequence is that of Conotoxin ArMSGL-021 from Conus arenatus (Sand-dusted cone).